We begin with the raw amino-acid sequence, 315 residues long: MITSFYAFLDYLKNMKASSLHTLRNYCMDLSSLKCFLEKKSDLSPTPPLSLHDNTYDYPPLSFSLFTKDNIRLYLLEQIQTHHSKRTVRRRLSAIKSFARFCVKNQLIPENPAEMIRGPRLPQELPSPLTYEQVLALMAAPELDKVTGFRDRCLLELFYSSGLRISEITALNRADIDFQSHLLHIRGKGKKERIVPMTKVAVQWLQDYLNHPDRASVEQDHQACFLNRFGKRLSTRSIDRKFQQYLLKTGLSGSITPHTIRHTIATHWLERGMDLKTIQLLLGHTSLETTTIYTHVSMKLKKQIHDETHPHNLEE.

One can recognise a Core-binding (CB) domain in the interval 1–103 (MITSFYAFLD…AIKSFARFCV (103 aa)). In terms of domain architecture, Tyr recombinase spans 124-306 (ELPSPLTYEQ…SMKLKKQIHD (183 aa)). Catalysis depends on residues arginine 164, lysine 188, histidine 258, arginine 261, and histidine 284. Tyrosine 293 functions as the O-(3'-phospho-DNA)-tyrosine intermediate in the catalytic mechanism.

The protein belongs to the 'phage' integrase family. XerC subfamily. In terms of assembly, forms a cyclic heterotetrameric complex composed of two molecules of XerC and two molecules of XerD.

It localises to the cytoplasm. Its function is as follows. Site-specific tyrosine recombinase, which acts by catalyzing the cutting and rejoining of the recombining DNA molecules. The XerC-XerD complex is essential to convert dimers of the bacterial chromosome into monomers to permit their segregation at cell division. It also contributes to the segregational stability of plasmids. In Chlamydia trachomatis serovar L2b (strain UCH-1/proctitis), this protein is Tyrosine recombinase XerC.